Reading from the N-terminus, the 230-residue chain is Large ribosomal subunit protein uL1 (230 aa).

Belongs to the universal ribosomal protein uL1 family. In terms of assembly, part of the 50S ribosomal subunit.

Binds directly to 23S rRNA. The L1 stalk is quite mobile in the ribosome, and is involved in E site tRNA release. In terms of biological role, protein L1 is also a translational repressor protein, it controls the translation of the L11 operon by binding to its mRNA. This Acidiphilium cryptum (strain JF-5) protein is Large ribosomal subunit protein uL1.